Here is a 224-residue protein sequence, read N- to C-terminus: 7-cyano-7-deazaguanine synthase (224 aa).

8 to 18 is an ATP binding site; it reads LSGGMDSAAVI. The Zn(2+) site is built by C186, C196, C199, and C202.

The protein belongs to the QueC family. Requires Zn(2+) as cofactor.

The catalysed reaction is 7-carboxy-7-deazaguanine + NH4(+) + ATP = 7-cyano-7-deazaguanine + ADP + phosphate + H2O + H(+). It participates in purine metabolism; 7-cyano-7-deazaguanine biosynthesis. Its function is as follows. Catalyzes the ATP-dependent conversion of 7-carboxy-7-deazaguanine (CDG) to 7-cyano-7-deazaguanine (preQ(0)). In Xanthomonas campestris pv. campestris (strain 8004), this protein is 7-cyano-7-deazaguanine synthase.